The primary structure comprises 419 residues: ATP-dependent RNA helicase RhlB (419 aa).

The short motif at 9–37 (QRFSDLALHRIVQQAIKEKGFEFCTPIQA) is the Q motif element. The region spanning 40–217 (LPITLKGQDI…FEHMNDPQYV (178 aa)) is the Helicase ATP-binding domain. 53–60 (AQTGTGKT) serves as a coordination point for ATP. A DEAD box motif is present at residues 163 to 166 (DEAD). Residues 241–388 (KMALLMTLLE…VSQYDAKALI (148 aa)) enclose the Helicase C-terminal domain.

Belongs to the DEAD box helicase family. RhlB subfamily. As to quaternary structure, component of the RNA degradosome, which is a multiprotein complex involved in RNA processing and mRNA degradation.

Its subcellular location is the cytoplasm. It catalyses the reaction ATP + H2O = ADP + phosphate + H(+). Its function is as follows. DEAD-box RNA helicase involved in RNA degradation. Has RNA-dependent ATPase activity and unwinds double-stranded RNA. The sequence is that of ATP-dependent RNA helicase RhlB from Histophilus somni (strain 2336) (Haemophilus somnus).